A 420-amino-acid chain; its full sequence is 4-hydroxy-3-methylbut-2-en-1-yl diphosphate synthase (flavodoxin) (420 aa).

[4Fe-4S] cluster is bound by residues Cys-307, Cys-310, Cys-353, and Glu-360.

It belongs to the IspG family. It depends on [4Fe-4S] cluster as a cofactor.

It catalyses the reaction (2E)-4-hydroxy-3-methylbut-2-enyl diphosphate + oxidized [flavodoxin] + H2O + 2 H(+) = 2-C-methyl-D-erythritol 2,4-cyclic diphosphate + reduced [flavodoxin]. Its pathway is isoprenoid biosynthesis; isopentenyl diphosphate biosynthesis via DXP pathway; isopentenyl diphosphate from 1-deoxy-D-xylulose 5-phosphate: step 5/6. Its function is as follows. Converts 2C-methyl-D-erythritol 2,4-cyclodiphosphate (ME-2,4cPP) into 1-hydroxy-2-methyl-2-(E)-butenyl 4-diphosphate. This chain is 4-hydroxy-3-methylbut-2-en-1-yl diphosphate synthase (flavodoxin), found in Brucella suis (strain ATCC 23445 / NCTC 10510).